A 498-amino-acid polypeptide reads, in one-letter code: MRTNPTTSRPGVSTIEEKSVGRIDQIIGPVLDITFPPGKLPYIYNALIVKSRDTADKQINVTCEVQQLLGNNRVRAVAMSATDGLMRGMEVIDTGTPLSVPVGGATLGRIFNVLGEPIDNLGPVDTSATFPIHRSAPAFIELDTKLSIFETGIKVVDLLAPYRRGGKIGLFGGAGVGKTVLIMELINNIAKAHGGVSVFGGVGERTREGNDLYMEMKESGVINEKNIEESKVALVYGQMNEPPGARMRVGLTALTMAEYFRDVNKQDVLLFIDNIFRFVQAGSEVSALLGRMPSAVGYQPTLSTEMGSLQERITSTKKGSITSIQAVYVPADDLTDPAPATTFAHLDATTVLSRGLASKGIYPAVDPLDSTSTMLQPRIVGNEHYETAQRVKETLQRYKELQDIIAILGLDELSEEDRLTVARARKIERFLSQPFFVAEVFTGSPGKYVGLAETIRGFQLILSGELDGLPEQAFYLVGNIDEASTKAINLEEESKLKK.

ATP is bound at residue 172-179 (GGAGVGKT).

Belongs to the ATPase alpha/beta chains family. As to quaternary structure, F-type ATPases have 2 components, CF(1) - the catalytic core - and CF(0) - the membrane proton channel. CF(1) has five subunits: alpha(3), beta(3), gamma(1), delta(1), epsilon(1). CF(0) has four main subunits: a(1), b(1), b'(1) and c(9-12).

It localises to the plastid. It is found in the chloroplast thylakoid membrane. It catalyses the reaction ATP + H2O + 4 H(+)(in) = ADP + phosphate + 5 H(+)(out). In terms of biological role, produces ATP from ADP in the presence of a proton gradient across the membrane. The catalytic sites are hosted primarily by the beta subunits. This is ATP synthase subunit beta, chloroplastic from Sorghum bicolor (Sorghum).